The primary structure comprises 235 residues: Orotidine 5'-phosphate decarboxylase (235 aa).

Residues Asp-17, Lys-39, 66–75 (DLKLHDIGNT), Thr-121, Arg-182, Gln-191, Gly-211, and Arg-212 contribute to the substrate site. Lys-68 acts as the Proton donor in catalysis.

The protein belongs to the OMP decarboxylase family. Type 1 subfamily. Homodimer.

The catalysed reaction is orotidine 5'-phosphate + H(+) = UMP + CO2. It participates in pyrimidine metabolism; UMP biosynthesis via de novo pathway; UMP from orotate: step 2/2. Its function is as follows. Catalyzes the decarboxylation of orotidine 5'-monophosphate (OMP) to uridine 5'-monophosphate (UMP). The chain is Orotidine 5'-phosphate decarboxylase from Rhodopseudomonas palustris (strain HaA2).